Consider the following 433-residue polypeptide: Glutamate-1-semialdehyde 2,1-aminomutase (433 aa).

Lys-273 is subject to N6-(pyridoxal phosphate)lysine.

The protein belongs to the class-III pyridoxal-phosphate-dependent aminotransferase family. HemL subfamily. Homodimer. The cofactor is pyridoxal 5'-phosphate.

The protein resides in the cytoplasm. It carries out the reaction (S)-4-amino-5-oxopentanoate = 5-aminolevulinate. The protein operates within porphyrin-containing compound metabolism; protoporphyrin-IX biosynthesis; 5-aminolevulinate from L-glutamyl-tRNA(Glu): step 2/2. It functions in the pathway porphyrin-containing compound metabolism; chlorophyll biosynthesis. This chain is Glutamate-1-semialdehyde 2,1-aminomutase, found in Crocosphaera subtropica (strain ATCC 51142 / BH68) (Cyanothece sp. (strain ATCC 51142)).